A 170-amino-acid polypeptide reads, in one-letter code: MREIRISKLVLNIAVAESGDRLQKAAKVLEQLTSQVPVYGRARFTVRSFAIRRNEKISCYVTVRGEKAYDLVKRGLAVKEFELIRKNFSDTGNFGFGIQEHIDLGLKYDPSTGIYGMDFYVCLERRGYRVARRRKQKAHVGVKHKVTKEDAIKWFQQEFDGVVLNKAPAS.

It belongs to the universal ribosomal protein uL5 family. In terms of assembly, component of the large ribosomal subunit.

Its subcellular location is the nucleus. It localises to the cytoplasm. Component of the ribosome, a large ribonucleoprotein complex responsible for the synthesis of proteins in the cell. The small ribosomal subunit (SSU) binds messenger RNAs (mRNAs) and translates the encoded message by selecting cognate aminoacyl-transfer RNA (tRNA) molecules. The large subunit (LSU) contains the ribosomal catalytic site termed the peptidyl transferase center (PTC), which catalyzes the formation of peptide bonds, thereby polymerizing the amino acids delivered by tRNAs into a polypeptide chain. The nascent polypeptides leave the ribosome through a tunnel in the LSU and interact with protein factors that function in enzymatic processing, targeting, and the membrane insertion of nascent chains at the exit of the ribosomal tunnel. The protein is Large ribosomal subunit protein uL5 (RPL11) of Chlamydomonas reinhardtii (Chlamydomonas smithii).